We begin with the raw amino-acid sequence, 320 residues long: uncharacterized protein (320 aa).

Transmembrane regions (helical) follow at residues 107–127, 131–151, 169–189, 200–220, 228–248, 260–280, and 299–319; these read LSKE…AGIY, VALL…IALS, LIAE…YLPI, ITLD…GSLS, IAVG…FGLL, ALIL…VIFS, and TLYA…LIIY.

The protein resides in the cell membrane. This is an uncharacterized protein from Methanocaldococcus jannaschii (strain ATCC 43067 / DSM 2661 / JAL-1 / JCM 10045 / NBRC 100440) (Methanococcus jannaschii).